The sequence spans 307 residues: L-lactate dehydrogenase (307 aa).

Residues Val-13, Asp-34, Arg-39, Tyr-64, and 78–79 (GV) contribute to the NAD(+) site. Arg-87 contacts substrate. Ser-100 serves as a coordination point for NAD(+). 119 to 122 (NPVD) lines the substrate pocket. Thr-142 contacts NAD(+). A substrate-binding site is contributed by 147 to 150 (DSAR). The active-site Proton acceptor is the His-174. Thr-224 is a binding site for substrate.

Belongs to the LDH/MDH superfamily. LDH family. In terms of assembly, homotetramer.

It is found in the cytoplasm. It carries out the reaction (S)-lactate + NAD(+) = pyruvate + NADH + H(+). Its pathway is fermentation; pyruvate fermentation to lactate; (S)-lactate from pyruvate: step 1/1. Functionally, catalyzes the conversion of lactate to pyruvate. The chain is L-lactate dehydrogenase from Lactobacillus delbrueckii subsp. bulgaricus (strain ATCC BAA-365 / Lb-18).